Reading from the N-terminus, the 400-residue chain is Phosphoglycerate kinase (400 aa).

Substrate-binding positions include 23–25 (DLN), R38, 61–64 (HFGR), R120, and R153. Residues K203, E325, and 355-358 (GGDT) each bind ATP.

It belongs to the phosphoglycerate kinase family. Monomer.

It localises to the cytoplasm. The catalysed reaction is (2R)-3-phosphoglycerate + ATP = (2R)-3-phospho-glyceroyl phosphate + ADP. It functions in the pathway carbohydrate degradation; glycolysis; pyruvate from D-glyceraldehyde 3-phosphate: step 2/5. The chain is Phosphoglycerate kinase from Rhizobium leguminosarum bv. trifolii (strain WSM2304).